The chain runs to 149 residues: 3-dehydroquinate dehydratase (149 aa).

Catalysis depends on Tyr-26, which acts as the Proton acceptor. Asn-77, His-83, and Asp-90 together coordinate substrate. The active-site Proton donor is the His-103. Substrate contacts are provided by residues 104–105 (LS) and Arg-114.

It belongs to the type-II 3-dehydroquinase family. In terms of assembly, homododecamer.

The enzyme catalyses 3-dehydroquinate = 3-dehydroshikimate + H2O. It functions in the pathway metabolic intermediate biosynthesis; chorismate biosynthesis; chorismate from D-erythrose 4-phosphate and phosphoenolpyruvate: step 3/7. Catalyzes a trans-dehydration via an enolate intermediate. In Edwardsiella ictaluri (strain 93-146), this protein is 3-dehydroquinate dehydratase.